The primary structure comprises 130 residues: Protein ApaG (130 aa).

Residues 3–127 (RALTRDIEVV…FSLDSPGLLR (125 aa)) enclose the ApaG domain. Positions 63 to 83 (EVTGPGVVGEQPRLSPGDTYE) are disordered.

The chain is Protein ApaG from Rhizobium etli (strain ATCC 51251 / DSM 11541 / JCM 21823 / NBRC 15573 / CFN 42).